Reading from the N-terminus, the 279-residue chain is Tryptophan synthase alpha chain (279 aa).

Residues glutamate 50 and aspartate 61 each act as proton acceptor in the active site.

This sequence belongs to the TrpA family. Tetramer of two alpha and two beta chains.

It catalyses the reaction (1S,2R)-1-C-(indol-3-yl)glycerol 3-phosphate + L-serine = D-glyceraldehyde 3-phosphate + L-tryptophan + H2O. It functions in the pathway amino-acid biosynthesis; L-tryptophan biosynthesis; L-tryptophan from chorismate: step 5/5. In terms of biological role, the alpha subunit is responsible for the aldol cleavage of indoleglycerol phosphate to indole and glyceraldehyde 3-phosphate. This is Tryptophan synthase alpha chain from Rhizobium rhizogenes (strain K84 / ATCC BAA-868) (Agrobacterium radiobacter).